Reading from the N-terminus, the 326-residue chain is Probable protein phosphatase 2C 61 (326 aa).

The 275-residue stretch at 42 to 316 (LGSVSSLAGG…DDISVVCLSL (275 aa)) folds into the PPM-type phosphatase domain. Positions 77, 78, 261, and 307 each coordinate Mn(2+).

The protein belongs to the PP2C family. Mg(2+) serves as cofactor. Requires Mn(2+) as cofactor.

It catalyses the reaction O-phospho-L-seryl-[protein] + H2O = L-seryl-[protein] + phosphate. The catalysed reaction is O-phospho-L-threonyl-[protein] + H2O = L-threonyl-[protein] + phosphate. In Arabidopsis thaliana (Mouse-ear cress), this protein is Probable protein phosphatase 2C 61.